The primary structure comprises 295 residues: Mediator of RNA polymerase II transcription subunit 6 (295 aa).

The interval 211 to 243 (TATAATNGNNAGGGSNKSSVRPTGGANMATVPS) is disordered. A Phosphoserine modification is found at Ser225.

It belongs to the Mediator complex subunit 6 family. In terms of assembly, component of the Mediator complex, which is composed of at least 21 subunits that form three structurally distinct submodules. The Mediator head module contains MED6, MED8, MED11, SRB4/MED17, SRB5/MED18, ROX3/MED19, SRB2/MED20 and SRB6/MED22, the middle module contains MED1, MED4, NUT1/MED5, MED7, CSE2/MED9, NUT2/MED10, SRB7/MED21 and SOH1/MED31, and the tail module contains MED2, PGD1/MED3, RGR1/MED14, GAL11/MED15 and SIN4/MED16. The head and the middle modules interact directly with RNA polymerase II, whereas the elongated tail module interacts with gene-specific regulatory proteins. MED6 interacts directly with SRB4/MED17 and SRB7/MED21.

Its subcellular location is the nucleus. Component of the Mediator complex, a coactivator involved in the regulated transcription of nearly all RNA polymerase II-dependent genes. Mediator functions as a bridge to convey information from gene-specific regulatory proteins to the basal RNA polymerase II transcription machinery. The Mediator complex, having a compact conformation in its free form, is recruited to promoters by direct interactions with regulatory proteins and serves for the assembly of a functional preinitiation complex with RNA polymerase II and the general transcription factors. The Mediator complex unfolds to an extended conformation and partially surrounds RNA polymerase II, specifically interacting with the unphosphorylated form of the C-terminal domain (CTD) of RNA polymerase II. The Mediator complex dissociates from the RNA polymerase II holoenzyme and stays at the promoter when transcriptional elongation begins. The chain is Mediator of RNA polymerase II transcription subunit 6 (MED6) from Saccharomyces cerevisiae (strain ATCC 204508 / S288c) (Baker's yeast).